The chain runs to 309 residues: MDEKVFTKELDQWIEQLNECKQLSESQVKSLCEKAKEILTKESNVQEVRCPVTVCGDVHGQFHDLMELFRIGGKSPDTNYLFMGDYVDRGYYSVETVTLLVALKVRYRERITILRGNHESRQITQVYGFYDECLRKYGNANVWKYFTDLFDYLPLTALVDGQIFCLHGGLSPSIDTLDHIRALDRLQEVPHEGPMCDLLWSDPDDRGGWGISPRGAGYTFGQDISETFNHANGLTLVSRAHQLVMEGYNWCHDRNVVTIFSAPNYCYRCGNQAAIMELDDTLKYSFLQFDPAPRRGEPHVTRRTPDYFL.

Mn(2+)-binding residues include aspartate 57, histidine 59, aspartate 85, and asparagine 117. Positions 57, 59, and 85 each coordinate Zn(2+). The Fe(3+) site is built by aspartate 85 and asparagine 117. The Proton donor role is filled by histidine 118. Residues histidine 167 and histidine 241 each coordinate Mn(2+). Positions 167 and 241 each coordinate Fe(3+). Tyrosine 307 is subject to Phosphotyrosine. Leucine methyl ester is present on leucine 309.

It belongs to the PPP phosphatase family. PP-1 subfamily. In terms of assembly, PP2A consists of a common heterodimeric core enzyme composed of PPP2CA, a 36 kDa catalytic subunit (subunit C), and PPP2R1A, a 65 kDa constant regulatory subunit (PR65 or subunit A), that associates with a variety of regulatory subunits. Proteins that associate with the core dimer include three families of regulatory subunits B (the R2/B/PR55/B55, R3/B''/PR72/PR130/PR59 and R5/B'/B56 families), the 48 kDa variable regulatory subunit, viral proteins, and cell signaling molecules. Interacts with the PP2A A subunit PPP2R1A. Interacts with the regulatory subunit PPP2R2A. Interacts (via C-terminus) with PTPA. Interacts with NXN; the interaction is direct. Interacts with KCTD20. Interacts with BTBD10. Interacts with SGO1 and SGO2. Interacts with RAF1. Interaction with IGBP1 protects unassembled PPP2CA from degradative ubiquitination. Interacts with GSK3B (via C2 domain). Interacts with MFHAS1; retains PPP2CA into the cytoplasm and excludes it from the nucleus. Interacts with PABIR1/FAM122A. Interacts with ADCY8; interaction is phosphatase activity-dependent; antagonizes interaction between ADCY8 and calmodulin. Interacts with CRTC3 (when phosphorylated at 'Ser-391'). Interacts with SPRY2; the interaction is inhibited by TESK1 interaction with SPRY2, possibly by vesicular sequestration of SPRY2. Interacts with TRAF3IP3. Interacts with AMBRA1 (via PxP motifs); enhancing interaction between PPP2CA and MYC or FOXO3. Forms a complex with AMBRA1 and BECN1; AMBRA1 and BECN1 components of the complex regulate MYC stability via different pathways. Part of the core of STRIPAK complexes composed of PP2A catalytic and scaffolding subunits, the striatins (PP2A regulatory subunits), the striatin-associated proteins MOB4, STRIP1 and STRIP2, PDCD10 and members of the STE20 kinases, such as STK24 and STK26. Phosphatase component of the Integrator-PP2A (INTAC) complex, composed of the Integrator core complex and protein phosphatase 2A subunits PPP2CA and PPP2R1A. It depends on Mn(2+) as a cofactor. Requires Fe(3+) as cofactor. Zn(2+) is required as a cofactor. Post-translationally, reversibly methyl esterified on Leu-309 by leucine carboxyl methyltransferase 1 (LCMT1) and protein phosphatase methylesterase 1 (PPME1). Carboxyl methylation influences the affinity of the catalytic subunit for the different regulatory subunits, thereby modulating the PP2A holoenzyme's substrate specificity, enzyme activity and cellular localization. Phosphorylation of either threonine (by autophosphorylation-activated protein kinase) or tyrosine results in inactivation of the phosphatase. Auto-dephosphorylation has been suggested as a mechanism for reactivation. In terms of processing, polyubiquitinated, leading to its degradation by the proteasome.

The protein resides in the cytoplasm. It localises to the nucleus. It is found in the chromosome. Its subcellular location is the centromere. The protein localises to the cytoskeleton. The protein resides in the spindle pole. The catalysed reaction is O-phospho-L-seryl-[protein] + H2O = L-seryl-[protein] + phosphate. It catalyses the reaction O-phospho-L-threonyl-[protein] + H2O = L-threonyl-[protein] + phosphate. With respect to regulation, inhibited by the interaction between PPP2R2A and ARPP19; this inhibition is enhanced when ARPP19 is phosphorylated. Inhibited by the interaction between PPP2R2A and PABIR1/FAM122A. In terms of biological role, catalytic subunit of protein phosphatase 2A (PP2A), a serine/threonine phosphatase involved in the regulation of a wide variety of enzymes, signal transduction pathways, and cellular events. PP2A is the major phosphatase for microtubule-associated proteins (MAPs). PP2A can modulate the activity of phosphorylase B kinase casein kinase 2, mitogen-stimulated S6 kinase, and MAP-2 kinase. Cooperates with SGO2 to protect centromeric cohesin from separase-mediated cleavage in oocytes specifically during meiosis I. Can dephosphorylate various proteins, such as SV40 large T antigen, AXIN1, p53/TP53, PIM3, WEE1. Activates RAF1 by dephosphorylating it at 'Ser-259'. Mediates dephosphorylation of WEE1, preventing its ubiquitin-mediated proteolysis, increasing WEE1 protein levels, and promoting the G2/M checkpoint. Mediates dephosphorylation of MYC; promoting its ubiquitin-mediated proteolysis: interaction with AMBRA1 enhances interaction between PPP2CA and MYC. Mediates dephosphorylation of FOXO3; promoting its stabilization: interaction with AMBRA1 enhances interaction between PPP2CA and FOXO3. Catalyzes dephosphorylation of the pyrin domain of NLRP3, promoting assembly of the NLRP3 inflammasome. Together with RACK1 adapter, mediates dephosphorylation of AKT1 at 'Ser-473', preventing AKT1 activation and AKT-mTOR signaling pathway. Dephosphorylation of AKT1 is essential for regulatory T-cells (Treg) homeostasis and stability. Catalyzes dephosphorylation of PIM3, promotinh PIM3 ubiquitination and proteasomal degradation. Part of the striatin-interacting phosphatase and kinase (STRIPAK) complexes. STRIPAK complexes have critical roles in protein (de)phosphorylation and are regulators of multiple signaling pathways including Hippo, MAPK, nuclear receptor and cytoskeleton remodeling. Different types of STRIPAK complexes are involved in a variety of biological processes such as cell growth, differentiation, apoptosis, metabolism and immune regulation. Key mediator of a quality checkpoint during transcription elongation as part of the Integrator-PP2A (INTAC) complex. The INTAC complex drives premature transcription termination of transcripts that are unfavorably configured for transcriptional elongation: within the INTAC complex, PPP2CA catalyzes dephosphorylation of the C-terminal domain (CTD) of Pol II subunit POLR2A/RPB1 and SUPT5H/SPT5, thereby preventing transcriptional elongation. The chain is Serine/threonine-protein phosphatase 2A catalytic subunit alpha isoform (PPP2CA) from Homo sapiens (Human).